A 274-amino-acid chain; its full sequence is Nitrate import ATP-binding protein NrtD (274 aa).

The ABC transporter domain maps to 17–250 (LHFDCVGKTF…RPREREAVVE (234 aa)). Residue 53-60 (GHSGCGKS) participates in ATP binding.

The protein belongs to the ABC transporter superfamily. Nitrate/nitrite/cyanate uptake transporter (NitT) (TC 3.A.1.16) family. In terms of assembly, the complex is composed of two ATP-binding proteins (NrtC and NrtD), two transmembrane proteins (NrtB) and a solute-binding protein (NrtA).

It localises to the cell inner membrane. The enzyme catalyses nitrate(out) + ATP + H2O = nitrate(in) + ADP + phosphate + H(+). Part of the ABC transporter complex NrtABCD involved in nitrate uptake. The complex is probably also involved in nitrite transport. Probably responsible for energy coupling to the transport system. In Synechococcus elongatus (strain ATCC 33912 / PCC 7942 / FACHB-805) (Anacystis nidulans R2), this protein is Nitrate import ATP-binding protein NrtD.